Consider the following 455-residue polypeptide: Phosphoglucosamine mutase (455 aa).

The active-site Phosphoserine intermediate is the S108. 4 residues coordinate Mg(2+): S108, D248, D250, and D252. Residue S108 is modified to Phosphoserine.

This sequence belongs to the phosphohexose mutase family. The cofactor is Mg(2+). Post-translationally, activated by phosphorylation.

The catalysed reaction is alpha-D-glucosamine 1-phosphate = D-glucosamine 6-phosphate. Functionally, catalyzes the conversion of glucosamine-6-phosphate to glucosamine-1-phosphate. This chain is Phosphoglucosamine mutase, found in Leuconostoc mesenteroides subsp. mesenteroides (strain ATCC 8293 / DSM 20343 / BCRC 11652 / CCM 1803 / JCM 6124 / NCDO 523 / NBRC 100496 / NCIMB 8023 / NCTC 12954 / NRRL B-1118 / 37Y).